A 325-amino-acid chain; its full sequence is MTFAKISQAAYYVPSQVVTNDDLSKIMDTSDEWITSRTGIRERRISQSEDTSDLASQVAKELLKKASLKAKEIDFIIVATITPDAMMPSTAACVQAKIGAVNAFAFDLTAACSGFIFALSAAEKMIKSGQYQKGLVIGAEVLSKIIDWSDRTTAVLFGDGAGGVLLEADSSEHFLFESIHSDGSRGESLTSGEHAVSSPFSQVDKKDNCFLKMDGRAIFDFAIRDVSKSISMLIRKSDMPVEAIDYFLLHQANIRILDKMAKKIGADREKFPANMMKYGNTSAASIPILLAECVENGTIELNGSHTVLLSGFGGGLTWGSLIVKI.

Active-site residues include cysteine 112 and histidine 250. The interval 251 to 255 (QANIR) is ACP-binding. Asparagine 280 is an active-site residue.

Belongs to the thiolase-like superfamily. FabH family. In terms of assembly, homodimer.

The protein resides in the cytoplasm. The enzyme catalyses malonyl-[ACP] + acetyl-CoA + H(+) = 3-oxobutanoyl-[ACP] + CO2 + CoA. It functions in the pathway lipid metabolism; fatty acid biosynthesis. In terms of biological role, catalyzes the condensation reaction of fatty acid synthesis by the addition to an acyl acceptor of two carbons from malonyl-ACP. Catalyzes the first condensation reaction which initiates fatty acid synthesis and may therefore play a role in governing the total rate of fatty acid production. Possesses both acetoacetyl-ACP synthase and acetyl transacylase activities. Its substrate specificity determines the biosynthesis of branched-chain and/or straight-chain of fatty acids. This is Beta-ketoacyl-[acyl-carrier-protein] synthase III from Streptococcus mutans serotype c (strain ATCC 700610 / UA159).